Consider the following 200-residue polypeptide: UPF0301 protein BOV_0485 (200 aa).

Belongs to the UPF0301 (AlgH) family.

The sequence is that of UPF0301 protein BOV_0485 from Brucella ovis (strain ATCC 25840 / 63/290 / NCTC 10512).